The primary structure comprises 382 residues: Chaperone protein DnaJ 1 (382 aa).

In terms of domain architecture, J spans 4 to 68 (DYYGILGVDR…DKRRIVDMGG (65 aa)). The CR-type zinc finger occupies 134 to 216 (GAKKDLTLDT…CAGDGRVRAR (83 aa)). Zn(2+)-binding residues include C147, C150, C164, C167, C190, C193, C204, and C207. CXXCXGXG motif repeat units lie at residues 147-154 (CTKCHGSG), 164-171 (CGTCNGAG), 190-197 (CHTCDGTG), and 204-211 (CTECAGDG).

The protein belongs to the DnaJ family. Homodimer. It depends on Zn(2+) as a cofactor.

Its subcellular location is the cytoplasm. Its function is as follows. Participates actively in the response to hyperosmotic and heat shock by preventing the aggregation of stress-denatured proteins and by disaggregating proteins, also in an autonomous, DnaK-independent fashion. Unfolded proteins bind initially to DnaJ; upon interaction with the DnaJ-bound protein, DnaK hydrolyzes its bound ATP, resulting in the formation of a stable complex. GrpE releases ADP from DnaK; ATP binding to DnaK triggers the release of the substrate protein, thus completing the reaction cycle. Several rounds of ATP-dependent interactions between DnaJ, DnaK and GrpE are required for fully efficient folding. Also involved, together with DnaK and GrpE, in the DNA replication of plasmids through activation of initiation proteins. This is Chaperone protein DnaJ 1 from Corynebacterium glutamicum (strain ATCC 13032 / DSM 20300 / JCM 1318 / BCRC 11384 / CCUG 27702 / LMG 3730 / NBRC 12168 / NCIMB 10025 / NRRL B-2784 / 534).